Here is a 266-residue protein sequence, read N- to C-terminus: Norfluorocurarine synthase 2 (266 aa).

The AB hydrolase-1 domain occupies 11-121 (HFVLVHGAGH…IMPDSTHPPI (111 aa)). Residues Ser-86, Asp-216, and His-244 contribute to the active site.

It belongs to the AB hydrolase superfamily. As to quaternary structure, homodimer. In terms of tissue distribution, mainly expressed in roots.

It catalyses the reaction 17-dehydropreakuammicine + H2O = norfluorocurarine + methanol + CO2. It functions in the pathway alkaloid biosynthesis. Its function is as follows. Hydrolase involved in the biosynthesis of curare monoterpene indole alkaloids (MIAs), natural products such as strychnine, a neurotoxic compound used as a pesticide to control rodents, and its pharmacologically active derivatives, including brucine, used to regulate blood pressure. Curare alkaloids act as animal glycine receptor antagonists. Catalyzes the conversion of dehydropreakuammicine to norfluorocurarine. The chain is Norfluorocurarine synthase 2 from Strychnos nux-vomica (Poison nut).